Here is a 128-residue protein sequence, read N- to C-terminus: Crossover junction endodeoxyribonuclease Hjc (128 aa).

A Mg(2+)-binding site is contributed by E10. Residue S30 is part of the active site. Mg(2+) contacts are provided by D34 and E47.

It belongs to the Holliday junction resolvase Hjc family. Homodimer. Requires Mg(2+) as cofactor.

It catalyses the reaction Endonucleolytic cleavage at a junction such as a reciprocal single-stranded crossover between two homologous DNA duplexes (Holliday junction).. Its function is as follows. A structure-specific endonuclease that resolves Holliday junction (HJ) intermediates during genetic recombination. Cleaves 4-way DNA junctions introducing paired nicks in opposing strands, leaving a 5'-terminal phosphate and a 3'-terminal hydroxyl group that are subsequently ligated to produce recombinant products. The polypeptide is Crossover junction endodeoxyribonuclease Hjc (Thermococcus kodakarensis (strain ATCC BAA-918 / JCM 12380 / KOD1) (Pyrococcus kodakaraensis (strain KOD1))).